A 116-amino-acid polypeptide reads, in one-letter code: MANFRGKRINEEVRKEVSDIIRNQIKDPRLTAMVSVTQVEVTKDLRYAKVFVSLFAKNDEEKEESLKALKSSAGFIRREVGNRVKLRSTPEILFEEDNSIDNAMYIESLLNKIKEK.

Belongs to the RbfA family. Monomer. Binds 30S ribosomal subunits, but not 50S ribosomal subunits or 70S ribosomes.

It is found in the cytoplasm. In terms of biological role, one of several proteins that assist in the late maturation steps of the functional core of the 30S ribosomal subunit. Associates with free 30S ribosomal subunits (but not with 30S subunits that are part of 70S ribosomes or polysomes). Required for efficient processing of 16S rRNA. May interact with the 5'-terminal helix region of 16S rRNA. The polypeptide is Ribosome-binding factor A (Clostridium perfringens (strain 13 / Type A)).